Here is a 242-residue protein sequence, read N- to C-terminus: Probable transcriptional regulatory protein NGK_1508 (242 aa).

It belongs to the TACO1 family.

The protein localises to the cytoplasm. This is Probable transcriptional regulatory protein NGK_1508 from Neisseria gonorrhoeae (strain NCCP11945).